The primary structure comprises 434 residues: Glutamine synthetase leaf isozyme, chloroplastic (434 aa).

2 disordered regions span residues 1–33 (MQVRRDDDGAGGCAGDAVPGGGEGQDGVPARQP) and 101–126 (TISKPVEDPSELPKWNYDGSSTGQAP). The transit peptide at 1–54 (MQVRRDDDGAGGCAGDAVPGGGEGQDGVPARQPAGRVWGVSRAARATSGFKVLA) directs the protein to the chloroplast. Residues 10 to 25 (AGGCAGDAVPGGGEGQ) are compositionally biased toward gly residues. A GS beta-grasp domain is found at 81 to 161 (IIAEYIWVGG…VICDTYTPQG (81 aa)). The GS catalytic domain maps to 168–434 (KRHMAAQIFS…LAAKKLALKV (267 aa)).

The protein belongs to the glutamine synthetase family. Homooctamer.

It is found in the plastid. The protein localises to the chloroplast. It carries out the reaction L-glutamate + NH4(+) + ATP = L-glutamine + ADP + phosphate + H(+). The light-modulated chloroplast enzyme, encoded by a nuclear gene and expressed primarily in leaves, is responsible for the reassimilation of the ammonia generated by photorespiration. This chain is Glutamine synthetase leaf isozyme, chloroplastic, found in Hordeum vulgare (Barley).